A 331-amino-acid chain; its full sequence is Aspartate carbamoyltransferase catalytic subunit (331 aa).

Carbamoyl phosphate contacts are provided by Arg-62 and Thr-63. Lys-90 contributes to the L-aspartate binding site. Positions 112, 145, and 148 each coordinate carbamoyl phosphate. L-aspartate-binding residues include Arg-185 and Arg-246. Carbamoyl phosphate contacts are provided by Gly-287 and Pro-288.

It belongs to the aspartate/ornithine carbamoyltransferase superfamily. ATCase family. As to quaternary structure, heterododecamer (2C3:3R2) of six catalytic PyrB chains organized as two trimers (C3), and six regulatory PyrI chains organized as three dimers (R2).

It carries out the reaction carbamoyl phosphate + L-aspartate = N-carbamoyl-L-aspartate + phosphate + H(+). The protein operates within pyrimidine metabolism; UMP biosynthesis via de novo pathway; (S)-dihydroorotate from bicarbonate: step 2/3. In terms of biological role, catalyzes the condensation of carbamoyl phosphate and aspartate to form carbamoyl aspartate and inorganic phosphate, the committed step in the de novo pyrimidine nucleotide biosynthesis pathway. This is Aspartate carbamoyltransferase catalytic subunit from Synechocystis sp. (strain ATCC 27184 / PCC 6803 / Kazusa).